Reading from the N-terminus, the 421-residue chain is Zinc metalloproteinase-disintegrin-like crotastatin (421 aa).

In terms of domain architecture, Peptidase M12B spans 10 to 206 (KYVKLFLVAD…NMPQCILKKP (197 aa)). The N-linked (GlcNAc...) asparagine glycan is linked to Asn-29. 3 cysteine pairs are disulfide-bonded: Cys-121-Cys-201, Cys-161-Cys-185, and Cys-163-Cys-168. His-146 contributes to the Zn(2+) binding site. Glu-147 is a catalytic residue. Residues His-150 and His-156 each coordinate Zn(2+). The region spanning 214 to 299 (PAVCGNYFVE…TECTDRFQRN (86 aa)) is the Disintegrin domain. Ca(2+)-binding residues include Val-216, Asn-219, Phe-221, Glu-223, Glu-226, and Asp-229. 14 disulfide bridges follow: Cys-217–Cys-246, Cys-228–Cys-241, Cys-230–Cys-236, Cys-240–Cys-263, Cys-254–Cys-260, Cys-259–Cys-285, Cys-272–Cys-292, Cys-279–Cys-310, Cys-303–Cys-315, Cys-322–Cys-372, Cys-337–Cys-383, Cys-350–Cys-360, Cys-367–Cys-409, and Cys-403–Cys-414. The D/ECD-tripeptide signature appears at 278–280 (ECD). Residues Asp-280, Met-281, Asp-283, Asp-294, and Arg-295 each coordinate Ca(2+).

It belongs to the venom metalloproteinase (M12B) family. P-III subfamily. P-IIIc sub-subfamily. Homodimer; disulfide-linked. Zn(2+) serves as cofactor. As to expression, expressed by the venom gland.

The protein resides in the secreted. Its function is as follows. Snake venom zinc metalloprotease that induces apoptosis in vascular endothelial cells (VEC), without degrading the extracellular matrix (it cannot cleave collagen) or inhibiting adhesion of VEC. Has also fibrinogenolytic and hemorrhagic activities. This chain is Zinc metalloproteinase-disintegrin-like crotastatin, found in Crotalus durissus terrificus (South American rattlesnake).